A 267-amino-acid chain; its full sequence is Hydroxyethylthiazole kinase (267 aa).

Position 48 (Met-48) interacts with substrate. ATP is bound by residues Arg-124 and Ser-170. Position 197 (Gly-197) interacts with substrate.

It belongs to the Thz kinase family. The cofactor is Mg(2+).

It carries out the reaction 5-(2-hydroxyethyl)-4-methylthiazole + ATP = 4-methyl-5-(2-phosphooxyethyl)-thiazole + ADP + H(+). Its pathway is cofactor biosynthesis; thiamine diphosphate biosynthesis; 4-methyl-5-(2-phosphoethyl)-thiazole from 5-(2-hydroxyethyl)-4-methylthiazole: step 1/1. Functionally, catalyzes the phosphorylation of the hydroxyl group of 4-methyl-5-beta-hydroxyethylthiazole (THZ). In Aliivibrio fischeri (strain ATCC 700601 / ES114) (Vibrio fischeri), this protein is Hydroxyethylthiazole kinase.